Here is a 304-residue protein sequence, read N- to C-terminus: MDLIEWFKDRRKNGRLSKEERQREIADGLWTKCVSCAALHYTKDFQLNLCVCPACGHHERVGAPERIPQLVDPDSWVSTDDHLLANDPLGFNDIKSYPERLAQAREKTGLSDAIVTGLATLEGRPIALGVMDFRFMGGSMGSVVGERITRLVERATAERRAAILVCASGGARMQEGVLSLVQMARTSAALQNHRSDRQLFVSVLTNPTTGGVTASFAMLGDIILAEPKATIGFAGRRVIEQTLRQKLPEGFQTAEFLLKHGFVDRIVERAQLRPTLARILRLHGVGQVQAYRPSPQASLAQEQQ.

Positions 29–298 (LWTKCVSCAA…QAYRPSPQAS (270 aa)) constitute a CoA carboxyltransferase N-terminal domain. Residues C33, C36, C52, and C55 each coordinate Zn(2+). The segment at 33-55 (CVSCAALHYTKDFQLNLCVCPAC) adopts a C4-type zinc-finger fold.

The protein belongs to the AccD/PCCB family. Acetyl-CoA carboxylase is a heterohexamer composed of biotin carboxyl carrier protein (AccB), biotin carboxylase (AccC) and two subunits each of ACCase subunit alpha (AccA) and ACCase subunit beta (AccD). Requires Zn(2+) as cofactor.

The protein localises to the cytoplasm. The catalysed reaction is N(6)-carboxybiotinyl-L-lysyl-[protein] + acetyl-CoA = N(6)-biotinyl-L-lysyl-[protein] + malonyl-CoA. Its pathway is lipid metabolism; malonyl-CoA biosynthesis; malonyl-CoA from acetyl-CoA: step 1/1. In terms of biological role, component of the acetyl coenzyme A carboxylase (ACC) complex. Biotin carboxylase (BC) catalyzes the carboxylation of biotin on its carrier protein (BCCP) and then the CO(2) group is transferred by the transcarboxylase to acetyl-CoA to form malonyl-CoA. This chain is Acetyl-coenzyme A carboxylase carboxyl transferase subunit beta, found in Gloeobacter violaceus (strain ATCC 29082 / PCC 7421).